The primary structure comprises 122 residues: Large ribosomal subunit protein uL14 (122 aa).

It belongs to the universal ribosomal protein uL14 family. Part of the 50S ribosomal subunit. Forms a cluster with proteins L3 and L19. In the 70S ribosome, L14 and L19 interact and together make contacts with the 16S rRNA in bridges B5 and B8.

Its function is as follows. Binds to 23S rRNA. Forms part of two intersubunit bridges in the 70S ribosome. The polypeptide is Large ribosomal subunit protein uL14 (Caldicellulosiruptor bescii (strain ATCC BAA-1888 / DSM 6725 / KCTC 15123 / Z-1320) (Anaerocellum thermophilum)).